Consider the following 240-residue polypeptide: Peptidyl-tRNA hydrolase (240 aa).

Residue tyrosine 14 coordinates tRNA. The active-site Proton acceptor is the histidine 19. Positions 64, 66, and 112 each coordinate tRNA. The interval 196–227 (EKPAQKQQPKQQSHIRQARSQQAPAKLPETGP) is disordered. Over residues 209–218 (HIRQARSQQA) the composition is skewed to polar residues.

It belongs to the PTH family. Monomer.

It localises to the cytoplasm. It catalyses the reaction an N-acyl-L-alpha-aminoacyl-tRNA + H2O = an N-acyl-L-amino acid + a tRNA + H(+). Functionally, hydrolyzes ribosome-free peptidyl-tRNAs (with 1 or more amino acids incorporated), which drop off the ribosome during protein synthesis, or as a result of ribosome stalling. In terms of biological role, catalyzes the release of premature peptidyl moieties from peptidyl-tRNA molecules trapped in stalled 50S ribosomal subunits, and thus maintains levels of free tRNAs and 50S ribosomes. The chain is Peptidyl-tRNA hydrolase from Mesorhizobium japonicum (strain LMG 29417 / CECT 9101 / MAFF 303099) (Mesorhizobium loti (strain MAFF 303099)).